The sequence spans 381 residues: Fatty acid elongase 6 (381 aa).

7 consecutive transmembrane segments (helical) span residues Ile-10–Ser-30, Leu-69–Val-89, Gly-107–Ile-127, Leu-153–Leu-173, Phe-182–Ala-202, Gly-216–Val-236, and Leu-280–Val-300. The HxxHH motif motif lies at His-184–His-188. Catalysis depends on His-187, which acts as the Nucleophile. The interval Arg-362 to Arg-381 is disordered.

It belongs to the ELO family.

Its subcellular location is the membrane. Its pathway is lipid metabolism; polyunsaturated fatty acid biosynthesis. Functionally, involved in the synthesis of fatty acids. Elongates C18 polyunsaturated fatty acids (PUFAs) with a preference for Delta6 PUFAs. This Leishmania major protein is Fatty acid elongase 6.